We begin with the raw amino-acid sequence, 340 residues long: Glyceraldehyde-3-phosphate dehydrogenase (340 aa).

NAD(+) contacts are provided by residues 11-12 (SI) and Gly111. Residue 140–142 (SCN) coordinates D-glyceraldehyde 3-phosphate. The active-site Nucleophile is the Cys141. Arg169 contacts NAD(+). Position 195–196 (195–196 (HG)) interacts with D-glyceraldehyde 3-phosphate. Gln303 serves as a coordination point for NAD(+).

The protein belongs to the glyceraldehyde-3-phosphate dehydrogenase family. In terms of assembly, homotetramer.

The protein resides in the cytoplasm. The enzyme catalyses D-glyceraldehyde 3-phosphate + phosphate + NADP(+) = (2R)-3-phospho-glyceroyl phosphate + NADPH + H(+). It carries out the reaction D-glyceraldehyde 3-phosphate + phosphate + NAD(+) = (2R)-3-phospho-glyceroyl phosphate + NADH + H(+). Its pathway is carbohydrate degradation; glycolysis; pyruvate from D-glyceraldehyde 3-phosphate: step 1/5. The protein is Glyceraldehyde-3-phosphate dehydrogenase of Methanococcus vannielii (strain ATCC 35089 / DSM 1224 / JCM 13029 / OCM 148 / SB).